A 476-amino-acid chain; its full sequence is Glycogen synthase (476 aa).

ADP-alpha-D-glucose is bound at residue Lys15.

This sequence belongs to the glycosyltransferase 1 family. Bacterial/plant glycogen synthase subfamily.

It catalyses the reaction [(1-&gt;4)-alpha-D-glucosyl](n) + ADP-alpha-D-glucose = [(1-&gt;4)-alpha-D-glucosyl](n+1) + ADP + H(+). It participates in glycan biosynthesis; glycogen biosynthesis. Its function is as follows. Synthesizes alpha-1,4-glucan chains using ADP-glucose. This is Glycogen synthase from Bacillus cereus (strain B4264).